Here is a 635-residue protein sequence, read N- to C-terminus: Cilia- and flagella-associated protein 206 (635 aa).

The protein belongs to the CFAP206 family.

It is found in the cytoplasm. The protein resides in the cytoskeleton. Its subcellular location is the cilium axoneme. Its function is as follows. May regulate cilium motility through its role in the assembly of the axonemal RS2 radial spoke. The protein is Cilia- and flagella-associated protein 206 of Tetrahymena thermophila (strain SB210).